Reading from the N-terminus, the 730-residue chain is Elongation factor 2 (730 aa).

The tr-type G domain maps to 19-229 (DYIRNIGIVA…NITFKDIIQY (211 aa)). Residues 28-35 (AHIDHGKT), 94-98 (DTPGH), and 148-151 (NKVD) each bind GTP. Diphthamide is present on His-597.

The protein belongs to the TRAFAC class translation factor GTPase superfamily. Classic translation factor GTPase family. EF-G/EF-2 subfamily.

It localises to the cytoplasm. Its function is as follows. Catalyzes the GTP-dependent ribosomal translocation step during translation elongation. During this step, the ribosome changes from the pre-translocational (PRE) to the post-translocational (POST) state as the newly formed A-site-bound peptidyl-tRNA and P-site-bound deacylated tRNA move to the P and E sites, respectively. Catalyzes the coordinated movement of the two tRNA molecules, the mRNA and conformational changes in the ribosome. In Methanosphaera stadtmanae (strain ATCC 43021 / DSM 3091 / JCM 11832 / MCB-3), this protein is Elongation factor 2.